The sequence spans 283 residues: tRNA pseudouridine synthase A (283 aa).

Residue Asp73 is the Nucleophile of the active site. The interval 120-124 (FHARF) is RNA binding. Residue Tyr131 coordinates substrate. The tract at residues 181-185 (QCQSR) is interaction with tRNA.

This sequence belongs to the tRNA pseudouridine synthase TruA family. As to quaternary structure, homodimer.

It carries out the reaction uridine(38/39/40) in tRNA = pseudouridine(38/39/40) in tRNA. Formation of pseudouridine at positions 38, 39 and 40 in the anticodon stem and loop of transfer RNAs. In Pectobacterium atrosepticum (strain SCRI 1043 / ATCC BAA-672) (Erwinia carotovora subsp. atroseptica), this protein is tRNA pseudouridine synthase A.